The following is a 323-amino-acid chain: Phosphoribosylformylglycinamidine cyclo-ligase (323 aa).

It belongs to the AIR synthase family.

Its subcellular location is the cytoplasm. It catalyses the reaction 2-formamido-N(1)-(5-O-phospho-beta-D-ribosyl)acetamidine + ATP = 5-amino-1-(5-phospho-beta-D-ribosyl)imidazole + ADP + phosphate + H(+). It participates in purine metabolism; IMP biosynthesis via de novo pathway; 5-amino-1-(5-phospho-D-ribosyl)imidazole from N(2)-formyl-N(1)-(5-phospho-D-ribosyl)glycinamide: step 2/2. The polypeptide is Phosphoribosylformylglycinamidine cyclo-ligase (Saccharolobus solfataricus (strain ATCC 35092 / DSM 1617 / JCM 11322 / P2) (Sulfolobus solfataricus)).